The chain runs to 537 residues: Chaperonin GroEL (537 aa).

Residues 31–34 (TLGP), 87–91 (DGTTT), Gly-415, and Asp-495 contribute to the ATP site.

The protein belongs to the chaperonin (HSP60) family. Forms a cylinder of 14 subunits composed of two heptameric rings stacked back-to-back. Interacts with the co-chaperonin GroES.

Its subcellular location is the cytoplasm. The enzyme catalyses ATP + H2O + a folded polypeptide = ADP + phosphate + an unfolded polypeptide.. Its function is as follows. Together with its co-chaperonin GroES, plays an essential role in assisting protein folding. The GroEL-GroES system forms a nano-cage that allows encapsulation of the non-native substrate proteins and provides a physical environment optimized to promote and accelerate protein folding. The chain is Chaperonin GroEL from Methanoregula boonei (strain DSM 21154 / JCM 14090 / 6A8).